The sequence spans 54 residues: Large ribosomal subunit protein bL33 (54 aa).

The protein belongs to the bacterial ribosomal protein bL33 family.

The protein is Large ribosomal subunit protein bL33 of Corynebacterium glutamicum (strain R).